Here is a 312-residue protein sequence, read N- to C-terminus: Ornithine carbamoyltransferase (312 aa).

Residues 60-63, Gln-87, Arg-111, and 138-141 each bind carbamoyl phosphate; these read STRT and HPCQ. Residues Asn-169, Asp-229, and 233–234 contribute to the L-ornithine site; that span reads SM. Carbamoyl phosphate is bound by residues 268–269 and Arg-296; that span reads CL.

This sequence belongs to the aspartate/ornithine carbamoyltransferase superfamily. OTCase family.

The protein resides in the cytoplasm. The catalysed reaction is carbamoyl phosphate + L-ornithine = L-citrulline + phosphate + H(+). The protein operates within amino-acid biosynthesis; L-arginine biosynthesis; L-arginine from L-ornithine and carbamoyl phosphate: step 1/3. Functionally, reversibly catalyzes the transfer of the carbamoyl group from carbamoyl phosphate (CP) to the N(epsilon) atom of ornithine (ORN) to produce L-citrulline. The chain is Ornithine carbamoyltransferase from Rhodopseudomonas palustris (strain BisA53).